The following is a 114-amino-acid chain: Ribonuclease P protein component (114 aa).

Belongs to the RnpA family. Consists of a catalytic RNA component (M1 or rnpB) and a protein subunit.

The catalysed reaction is Endonucleolytic cleavage of RNA, removing 5'-extranucleotides from tRNA precursor.. Functionally, RNaseP catalyzes the removal of the 5'-leader sequence from pre-tRNA to produce the mature 5'-terminus. It can also cleave other RNA substrates such as 4.5S RNA. The protein component plays an auxiliary but essential role in vivo by binding to the 5'-leader sequence and broadening the substrate specificity of the ribozyme. This chain is Ribonuclease P protein component, found in Legionella pneumophila (strain Lens).